A 700-amino-acid chain; its full sequence is UvrABC system protein C (700 aa).

Residues 11–90 form the GIY-YIG domain; sequence TTPGVYLYKD…IKKHRPRYNI (80 aa). The UVR domain occupies 200 to 235; sequence TELIDMLRADMQAASDALEFEEAALLRDQLQAVERT.

This sequence belongs to the UvrC family. As to quaternary structure, interacts with UvrB in an incision complex.

Its subcellular location is the cytoplasm. Its function is as follows. The UvrABC repair system catalyzes the recognition and processing of DNA lesions. UvrC both incises the 5' and 3' sides of the lesion. The N-terminal half is responsible for the 3' incision and the C-terminal half is responsible for the 5' incision. The sequence is that of UvrABC system protein C from Oleidesulfovibrio alaskensis (strain ATCC BAA-1058 / DSM 17464 / G20) (Desulfovibrio alaskensis).